Here is a 386-residue protein sequence, read N- to C-terminus: Na(+)/H(+) antiporter NhaA (386 aa).

The next 10 helical transmembrane spans lie at 10-30, 45-65, 84-104, 116-136, 142-162, 169-189, 261-281, 287-307, 323-343, and 358-378; these read EFSIPLLAGVLTALVWANVAP, LSFHFVTNDIFMAFFFAIAAV, LNPLLATAGGVVGPVGVYLAL, GWGIPTATDIAFAWLAARLIF, VIAFLLLLAIADDAIGLVIIA, VLPVAPPWLMLTAAGMLIAFI, IIVDFGLFMFGLANAGVGFSA, WLVFCALLFGKVTGIFVFALL, HLLVAGIIAGIGFTVALFVAG, and GAILSIAVFPVAMAAAKLLGI.

This sequence belongs to the NhaA Na(+)/H(+) (TC 2.A.33) antiporter family.

It localises to the cell inner membrane. It catalyses the reaction Na(+)(in) + 2 H(+)(out) = Na(+)(out) + 2 H(+)(in). In terms of biological role, na(+)/H(+) antiporter that extrudes sodium in exchange for external protons. In Geotalea uraniireducens (strain Rf4) (Geobacter uraniireducens), this protein is Na(+)/H(+) antiporter NhaA.